A 359-amino-acid chain; its full sequence is CMP-N-acetylneuraminate-poly-alpha-2,8-sialyltransferase (359 aa).

Residues 1 to 7 are Cytoplasmic-facing; sequence MRSIRKR. The chain crosses the membrane as a helical; Signal-anchor for type II membrane protein span at residues 8–20; the sequence is WTICTISLLLIFY. Residues 21–359 lie on the Lumenal side of the membrane; it reads KTKEIARTEE…KLTTGKCVKQ (339 aa). Asparagine 50, asparagine 74, and asparagine 119 each carry an N-linked (GlcNAc...) asparagine glycan. 2 disulfides stabilise this stretch: cysteine 142–cysteine 292 and cysteine 156–cysteine 356. CMP-N-acetyl-beta-neuraminate is bound by residues asparagine 147 and asparagine 170. Asparagine 204 and asparagine 219 each carry an N-linked (GlcNAc...) asparagine glycan. Residues serine 279, threonine 280, glycine 281, and tryptophan 301 each coordinate CMP-N-acetyl-beta-neuraminate. Histidine 331 serves as the catalytic Proton donor/acceptor.

The protein belongs to the glycosyltransferase 29 family. Post-translationally, autopolysialylated.

The protein resides in the golgi apparatus membrane. It is found in the secreted. The catalysed reaction is [N-acetyl-alpha-D-neuraminosyl-(2-&gt;8)](n) + CMP-N-acetyl-beta-neuraminate = [N-acetyl-alpha-D-neuraminosyl-(2-&gt;8)](n+1) + CMP + H(+). In terms of biological role, catalyzes the transfer of a sialic acid from a CMP-linked sialic acid donor onto a terminal alpha-2,3-, alpha-2,6-, or alpha-2,8-linked sialic acid of an N-linked glycan protein acceptor through alpha-2,8-linkages. Therefore, participates in polysialic acid synthesis on various sialylated N-acetyllactosaminyl oligosaccharides, including NCAM1 N-glycans, FETUB N-glycans and AHSG. It is noteworthy that alpha-2,3-linked sialic acid is apparently a better acceptor than alpha-2,6-linked sialic acid. This is CMP-N-acetylneuraminate-poly-alpha-2,8-sialyltransferase (ST8SIA4) from Pan troglodytes (Chimpanzee).